Here is a 635-residue protein sequence, read N- to C-terminus: Chaperone protein HtpG (635 aa).

The interval 1–346 (MSQTTTTSAS…SADLPLNVSR (346 aa)) is a; substrate-binding. A b region spans residues 347–563 (EILQESRDVR…QNELSPHLLR (217 aa)). The interval 564–635 (MLKAAGQEAP…KRLNGLLLKA (72 aa)) is c.

This sequence belongs to the heat shock protein 90 family. In terms of assembly, homodimer.

Its subcellular location is the cytoplasm. In terms of biological role, molecular chaperone. Has ATPase activity. This chain is Chaperone protein HtpG, found in Bordetella pertussis (strain Tohama I / ATCC BAA-589 / NCTC 13251).